The following is a 531-amino-acid chain: Peptide chain release factor 3 (531 aa).

The 270-residue stretch at 13-282 (SKRRTFAIIS…GLTQWAPSPM (270 aa)) folds into the tr-type G domain. GTP-binding positions include 22-29 (SHPDAGKT), 90-94 (DTPGH), and 144-147 (NKLD).

Belongs to the TRAFAC class translation factor GTPase superfamily. Classic translation factor GTPase family. PrfC subfamily.

Its subcellular location is the cytoplasm. Increases the formation of ribosomal termination complexes and stimulates activities of RF-1 and RF-2. It binds guanine nucleotides and has strong preference for UGA stop codons. It may interact directly with the ribosome. The stimulation of RF-1 and RF-2 is significantly reduced by GTP and GDP, but not by GMP. The sequence is that of Peptide chain release factor 3 from Vibrio cholerae serotype O1 (strain ATCC 39315 / El Tor Inaba N16961).